The chain runs to 1002 residues: Transposase for transposon gamma-delta (1002 aa).

The protein belongs to the transposase 7 family.

Its function is as follows. Required for transposition of transposon Tn1000. In Escherichia coli (strain K12), this protein is Transposase for transposon gamma-delta (tnpA).